The primary structure comprises 66 residues: Large ribosomal subunit protein bL33c (66 aa).

Belongs to the bacterial ribosomal protein bL33 family.

Its subcellular location is the plastid. It is found in the chloroplast. This Nicotiana sylvestris (Wood tobacco) protein is Large ribosomal subunit protein bL33c.